Consider the following 900-residue polypeptide: Sterol regulatory element-binding protein 1 (900 aa).

The segment covering Met-1–Ala-16 has biased composition (low complexity). 2 disordered regions span residues Met-1–Ser-49 and Thr-206–Thr-263. A nuclear form of sre1; complements deletions of sre1 or scp1 region spans residues Met-1–Pro-440. The Cytoplasmic segment spans residues Met-1–Thr-442. Polar residues predominate over residues Thr-21–Ser-32. Residues Ala-35–Ser-49 show a composition bias toward low complexity. The region spanning Pro-260–Leu-332 is the bHLH domain. A helical membrane pass occupies residues Gly-443–Leu-463. Residues His-464–Ser-509 lie on the Lumenal side of the membrane. The helical transmembrane segment at Thr-510–Thr-530 threads the bilayer. The Cytoplasmic segment spans residues His-531–Ala-900. 2 positions are modified to phosphoserine: Ser-898 and Ser-899.

As to quaternary structure, forms a tight complex with scp1, composed of 4 copies of scp1 and 4 copies of sre1, which protects sre1 precursor from degradation by the proteasome. In low oxygen or sterol conditions, undergoes proteolytic cleavage by rhomboid-type protease rbd2 and is released as soluble transcription factor from the membrane. In terms of processing, processed form is phosphorylated.

The protein localises to the endoplasmic reticulum membrane. Its subcellular location is the nucleus. Its function is as follows. Precursor of the transcription factor form (Processed sterol regulatory element-binding protein 1), which is embedded in the endoplasmic reticulum membrane. Low oxygen or sterol conditions promote processing of this form, releasing the transcription factor form that translocates into the nucleus and activates transcription of genes required for adaptation to anaerobic growth. Transcriptional activator required for transcription of genes required for adaptation to anaerobic growth like those implicated in the nonrespiratory oxygen-consumptive biosynthetic pathways of sterol, heme, sphingolipid, and ubiquinone biosynthesis. May monitor oxygen levels through sterol synthesis steps which require oxygen. The polypeptide is Sterol regulatory element-binding protein 1 (Schizosaccharomyces pombe (strain 972 / ATCC 24843) (Fission yeast)).